The following is a 367-amino-acid chain: Anhydro-N-acetylmuramic acid kinase (367 aa).

13 to 20 (GTSMDGAD) serves as a coordination point for ATP.

It belongs to the anhydro-N-acetylmuramic acid kinase family.

The catalysed reaction is 1,6-anhydro-N-acetyl-beta-muramate + ATP + H2O = N-acetyl-D-muramate 6-phosphate + ADP + H(+). It functions in the pathway amino-sugar metabolism; 1,6-anhydro-N-acetylmuramate degradation. The protein operates within cell wall biogenesis; peptidoglycan recycling. In terms of biological role, catalyzes the specific phosphorylation of 1,6-anhydro-N-acetylmuramic acid (anhMurNAc) with the simultaneous cleavage of the 1,6-anhydro ring, generating MurNAc-6-P. Is required for the utilization of anhMurNAc either imported from the medium or derived from its own cell wall murein, and thus plays a role in cell wall recycling. This Neisseria meningitidis serogroup B (strain ATCC BAA-335 / MC58) protein is Anhydro-N-acetylmuramic acid kinase.